The following is a 118-amino-acid chain: Protein BEX4 (118 aa).

The segment at 14 to 50 (VEKDKKNKKGGKASKQSEEESHHLEEVENKKPGGNVR) is disordered. The segment covering 28 to 44 (KQSEEESHHLEEVENKK) has biased composition (basic and acidic residues). The interaction with SIRT2 stretch occupies residues 30–88 (SEEESHHLEEVENKKPGGNVRRKVRRLVPNFLWAIPNRHVDHSEGGEEVGRFVGQVMEA). The interval 30-118 (SEEESHHLEE…DNHYDFCLIP (89 aa)) is interaction with alpha-tubulin. C115 contributes to the Zn(2+) binding site.

It belongs to the BEX family. In terms of assembly, interacts with alpha-tubulin. Interacts with SIRT2. Post-translationally, ubiquitinated and degraded by the proteasome.

It localises to the cytoplasm. Its subcellular location is the cytoskeleton. The protein resides in the spindle pole. It is found in the nucleus. In terms of biological role, may play a role in microtubule deacetylation by negatively regulating the SIRT2 deacetylase activity toward alpha-tubulin and thereby participate in the control of cell cycle progression and genomic stability. In absence of reductive stress, acts as a pseudosubstrate for the CRL2(FEM1B) complex: associates with FEM1B via zinc, thereby preventing association between FEM1B and its substrates. In Rattus norvegicus (Rat), this protein is Protein BEX4.